Here is a 364-residue protein sequence, read N- to C-terminus: DNA replication and repair protein RecF (364 aa).

Residue 30–37 (GNNGMGKT) participates in ATP binding.

This sequence belongs to the RecF family.

Its subcellular location is the cytoplasm. Functionally, the RecF protein is involved in DNA metabolism; it is required for DNA replication and normal SOS inducibility. RecF binds preferentially to single-stranded, linear DNA. It also seems to bind ATP. In Porphyromonas gingivalis (strain ATCC 33277 / DSM 20709 / CIP 103683 / JCM 12257 / NCTC 11834 / 2561), this protein is DNA replication and repair protein RecF.